The following is a 477-amino-acid chain: Glycogen synthase (477 aa).

Lys15 is a binding site for ADP-alpha-D-glucose.

It belongs to the glycosyltransferase 1 family. Bacterial/plant glycogen synthase subfamily.

The catalysed reaction is [(1-&gt;4)-alpha-D-glucosyl](n) + ADP-alpha-D-glucose = [(1-&gt;4)-alpha-D-glucosyl](n+1) + ADP + H(+). The protein operates within glycan biosynthesis; glycogen biosynthesis. Synthesizes alpha-1,4-glucan chains using ADP-glucose. This chain is Glycogen synthase, found in Streptococcus pneumoniae (strain 70585).